A 174-amino-acid polypeptide reads, in one-letter code: Guided entry of tail-anchored proteins factor 1 (174 aa).

The Lumenal segment spans residues 1–8; that stretch reads MSASETDR. Residues 9–29 traverse the membrane as a helical segment; it reads WAWLLVLSFVFGCNLLRILLP. The Cytoplasmic segment spans residues 30-99; sequence SLSSFISRVL…VKARTAQLAK (70 aa). The stretch at 39–94 forms a coiled coil; it reads LQKDAEQESQMRAEIQGMKQELSTVNMMDEFARYARLERKINKMTDKLKTHVKART. Positions 39 to 97 are interaction with GET3/TRC40; it reads LQKDAEQESQMRAEIQGMKQELSTVNMMDEFARYARLERKINKMTDKLKTHVKARTAQL. The helical transmembrane segment at 100 to 120 threads the bilayer; the sequence is IKWFISVAFYILQAALMISLI. The Lumenal portion of the chain corresponds to 121-148; the sequence is WKYYSVPVAVVPSKWITPLDRLVAFPTR. The chain crosses the membrane as a helical span at residues 149–169; that stretch reads VAGGIGITCWILVCNKVVAIV. Residues 170–174 lie on the Cytoplasmic side of the membrane; that stretch reads LHPFS.

This sequence belongs to the WRB/GET1 family. As to quaternary structure, component of the Golgi to ER traffic (GET) complex, which is composed of GET1, CAMLG/GET2 and GET3. Within the complex, GET1 and CAMLG form a heterotetramer which is stabilized by phosphatidylinositol binding and which binds to the GET3 homodimer. Interacts with CAMLG/GET2 (via C-terminus). GET3 shows a higher affinity for CAMLG than for GET1.

The protein resides in the endoplasmic reticulum membrane. Its function is as follows. Required for the post-translational delivery of tail-anchored (TA) proteins to the endoplasmic reticulum. Together with CAMLG/GET2, acts as a membrane receptor for soluble GET3/TRC40, which recognizes and selectively binds the transmembrane domain of TA proteins in the cytosol. Required to ensure correct topology and ER insertion of CAMLG. This chain is Guided entry of tail-anchored proteins factor 1, found in Mus musculus (Mouse).